Reading from the N-terminus, the 317-residue chain is tRNA dimethylallyltransferase (317 aa).

16–23 provides a ligand contact to ATP; it reads GPTASGKS. 18–23 contributes to the substrate binding site; the sequence is TASGKS. 3 interaction with substrate tRNA regions span residues 41-44, 165-169, and 247-252; these read DSAQ, QRIQR, and RCVGYR.

This sequence belongs to the IPP transferase family. In terms of assembly, monomer. The cofactor is Mg(2+).

It catalyses the reaction adenosine(37) in tRNA + dimethylallyl diphosphate = N(6)-dimethylallyladenosine(37) in tRNA + diphosphate. Catalyzes the transfer of a dimethylallyl group onto the adenine at position 37 in tRNAs that read codons beginning with uridine, leading to the formation of N6-(dimethylallyl)adenosine (i(6)A). The chain is tRNA dimethylallyltransferase from Nitrosomonas europaea (strain ATCC 19718 / CIP 103999 / KCTC 2705 / NBRC 14298).